The following is a 478-amino-acid chain: Glycogen synthase (478 aa).

Lys15 contacts ADP-alpha-D-glucose.

This sequence belongs to the glycosyltransferase 1 family. Bacterial/plant glycogen synthase subfamily.

The catalysed reaction is [(1-&gt;4)-alpha-D-glucosyl](n) + ADP-alpha-D-glucose = [(1-&gt;4)-alpha-D-glucosyl](n+1) + ADP + H(+). It participates in glycan biosynthesis; glycogen biosynthesis. Its function is as follows. Synthesizes alpha-1,4-glucan chains using ADP-glucose. This Enterobacter sp. (strain 638) protein is Glycogen synthase.